A 137-amino-acid chain; its full sequence is MKIYCCLNTVGFFMDGCGVIPPDSKEITAEHWQSLLKSQAEGGVIDFSVFPPSIKEVIRTHDDEVADANFQKQMLISDATDFINSRQWQGKAALGRLKEDELKQYNLWLDYLEALELVDTSSAPDIEWPTPPAVQAR.

The protein to E.coli YfdK.

This is an uncharacterized protein from Escherichia coli (strain K12).